The sequence spans 305 residues: Mycothiol acetyltransferase (305 aa).

N-acetyltransferase domains lie at 10–153 and 156–305; these read DRLD…LVVP and ISLR…YARA. Glu-38 contributes to the 1D-myo-inositol 2-(L-cysteinylamino)-2-deoxy-alpha-D-glucopyranoside binding site. 82–84 contributes to the acetyl-CoA binding site; it reads LAV. 1D-myo-inositol 2-(L-cysteinylamino)-2-deoxy-alpha-D-glucopyranoside-binding residues include Glu-183, Lys-225, and Glu-238. Residues 242-244 and 249-255 contribute to the acetyl-CoA site; these read VAI and QGRGLGR. Tyr-276 is a binding site for 1D-myo-inositol 2-(L-cysteinylamino)-2-deoxy-alpha-D-glucopyranoside. Residue 281–286 coordinates acetyl-CoA; it reads NESALH.

It belongs to the acetyltransferase family. MshD subfamily. In terms of assembly, monomer.

It carries out the reaction 1D-myo-inositol 2-(L-cysteinylamino)-2-deoxy-alpha-D-glucopyranoside + acetyl-CoA = mycothiol + CoA + H(+). Its function is as follows. Catalyzes the transfer of acetyl from acetyl-CoA to desacetylmycothiol (Cys-GlcN-Ins) to form mycothiol. This is Mycothiol acetyltransferase from Rhodococcus jostii (strain RHA1).